The chain runs to 151 residues: NADH-quinone oxidoreductase subunit I 2 (151 aa).

4Fe-4S ferredoxin-type domains follow at residues 49–82 and 93–122; these read PRLNINPDNGETLCISCNLCALACPENLIVVTSE and VTFTYDTSRCMFCGLCEDACPVDALELTQD. Positions 62, 65, 68, 72, 102, 105, 108, and 112 each coordinate [4Fe-4S] cluster.

This sequence belongs to the complex I 23 kDa subunit family. NDH-1 is composed of 14 different subunits. Subunits NuoA, H, J, K, L, M, N constitute the membrane sector of the complex. It depends on [4Fe-4S] cluster as a cofactor.

The protein localises to the cell inner membrane. The enzyme catalyses a quinone + NADH + 5 H(+)(in) = a quinol + NAD(+) + 4 H(+)(out). In terms of biological role, NDH-1 shuttles electrons from NADH, via FMN and iron-sulfur (Fe-S) centers, to quinones in the respiratory chain. The immediate electron acceptor for the enzyme in this species is believed to be ubiquinone. Couples the redox reaction to proton translocation (for every two electrons transferred, four hydrogen ions are translocated across the cytoplasmic membrane), and thus conserves the redox energy in a proton gradient. The protein is NADH-quinone oxidoreductase subunit I 2 of Solibacter usitatus (strain Ellin6076).